The sequence spans 308 residues: Glycine--tRNA ligase alpha subunit (308 aa).

This sequence belongs to the class-II aminoacyl-tRNA synthetase family. In terms of assembly, tetramer of two alpha and two beta subunits.

Its subcellular location is the cytoplasm. The catalysed reaction is tRNA(Gly) + glycine + ATP = glycyl-tRNA(Gly) + AMP + diphosphate. This is Glycine--tRNA ligase alpha subunit from Brevibacillus brevis (strain 47 / JCM 6285 / NBRC 100599).